The primary structure comprises 379 residues: Queuine tRNA-ribosyltransferase (379 aa).

Catalysis depends on aspartate 94, which acts as the Proton acceptor. Substrate contacts are provided by residues 94–98 (DSGGF), aspartate 148, glutamine 191, and glycine 218. The interval 249–255 (GVGSPDS) is RNA binding. Aspartate 268 acts as the Nucleophile in catalysis. Positions 273–277 (TRIAR) are RNA binding; important for wobble base 34 recognition. 4 residues coordinate Zn(2+): cysteine 306, cysteine 308, cysteine 311, and histidine 337.

This sequence belongs to the queuine tRNA-ribosyltransferase family. In terms of assembly, homodimer. Within each dimer, one monomer is responsible for RNA recognition and catalysis, while the other monomer binds to the replacement base PreQ1. It depends on Zn(2+) as a cofactor.

It catalyses the reaction 7-aminomethyl-7-carbaguanine + guanosine(34) in tRNA = 7-aminomethyl-7-carbaguanosine(34) in tRNA + guanine. It functions in the pathway tRNA modification; tRNA-queuosine biosynthesis. In terms of biological role, catalyzes the base-exchange of a guanine (G) residue with the queuine precursor 7-aminomethyl-7-deazaguanine (PreQ1) at position 34 (anticodon wobble position) in tRNAs with GU(N) anticodons (tRNA-Asp, -Asn, -His and -Tyr). Catalysis occurs through a double-displacement mechanism. The nucleophile active site attacks the C1' of nucleotide 34 to detach the guanine base from the RNA, forming a covalent enzyme-RNA intermediate. The proton acceptor active site deprotonates the incoming PreQ1, allowing a nucleophilic attack on the C1' of the ribose to form the product. After dissociation, two additional enzymatic reactions on the tRNA convert PreQ1 to queuine (Q), resulting in the hypermodified nucleoside queuosine (7-(((4,5-cis-dihydroxy-2-cyclopenten-1-yl)amino)methyl)-7-deazaguanosine). This is Queuine tRNA-ribosyltransferase from Bacillus cereus (strain Q1).